The chain runs to 311 residues: LOB domain-containing protein 10 (311 aa).

The LOB domain maps to 4 to 105; that stretch reads TPCAACKLLR…QDLLTAKEEL (102 aa). Over residues 264 to 277 the composition is skewed to low complexity; it reads LQEGQEQTEEGQFL. The disordered stretch occupies residues 264 to 311; sequence LQEGQEQTEEGQFLMQPMGQENLHDEEEEEELEPPVKWRMSENKEASF. Acidic residues predominate over residues 287-296; that stretch reads HDEEEEEELE. A compositionally biased stretch (basic and acidic residues) spans 297–311; that stretch reads PPVKWRMSENKEASF.

It belongs to the LOB domain-containing protein family.

The sequence is that of LOB domain-containing protein 10 (LBD10) from Arabidopsis thaliana (Mouse-ear cress).